We begin with the raw amino-acid sequence, 362 residues long: Beta-ketoacyl-[acyl-carrier-protein] synthase III 2 (362 aa).

Active-site residues include C113 and H251. The tract at residues 252 to 256 (QANIR) is ACP-binding. The active site involves N281.

This sequence belongs to the thiolase-like superfamily. FabH family. In terms of assembly, homodimer.

It is found in the cytoplasm. The enzyme catalyses malonyl-[ACP] + acetyl-CoA + H(+) = 3-oxobutanoyl-[ACP] + CO2 + CoA. Its pathway is lipid metabolism; fatty acid biosynthesis. Its function is as follows. Catalyzes the condensation reaction of fatty acid synthesis by the addition to an acyl acceptor of two carbons from malonyl-ACP. Catalyzes the first condensation reaction which initiates fatty acid synthesis and may therefore play a role in governing the total rate of fatty acid production. Possesses both acetoacetyl-ACP synthase and acetyl transacylase activities. Its substrate specificity determines the biosynthesis of branched-chain and/or straight-chain of fatty acids. The chain is Beta-ketoacyl-[acyl-carrier-protein] synthase III 2 from Vibrio cholerae serotype O1 (strain ATCC 39315 / El Tor Inaba N16961).